Reading from the N-terminus, the 394-residue chain is Ceramide glucosyltransferase-B (394 aa).

Residues 1–10 (MAVLDLALQG) lie on the Lumenal side of the membrane. A helical transmembrane segment spans residues 11 to 32 (LAIFGCILFFVLWFMHFLSIVY). Residues 33–195 (TRLHLNKKVS…QVYFGTSHPR (163 aa)) are Cytoplasmic-facing. Asp-92 is a short sequence motif (D1). Residue Asp-144 is a short sequence motif, D2. The helical transmembrane segment at 196 to 215 (SYISANVTGIKCVTGMSCLM) threads the bilayer. The Lumenal portion of the chain corresponds to 216 to 287 (RKEVLDQAGG…KLRINMLPAT (72 aa)). Asp-236 is a short sequence motif (D3). Asp-236 functions as the Proton acceptor in the catalytic mechanism. A (Q/R)XXRW motif is present at residues 272–276 (RMIRW). The helical transmembrane segment at 288–304 (IICEPISECFVASLIIG) threads the bilayer. The Cytoplasmic segment spans residues 305–309 (WAAHH). The chain crosses the membrane as a helical span at residues 310–328 (IFRWDIMVFFMCHCLAWFI). The Lumenal segment spans residues 329 to 348 (FDYIQLRGVQGGPLNFSKLD). Residues 349–369 (YAVAWFIRESMTIYIFLSALW) form a helical membrane-spanning segment. The Cytoplasmic portion of the chain corresponds to 370–394 (DPTISWRTGRYRLRCGGTAEEILDV).

It belongs to the glycosyltransferase 2 family.

It is found in the golgi apparatus membrane. The catalysed reaction is an N-acylsphing-4-enine + UDP-alpha-D-glucose = a beta-D-glucosyl-(1&lt;-&gt;1')-N-acylsphing-4-enine + UDP + H(+). It catalyses the reaction UDP-alpha-D-xylose + an N-acylsphing-4-enine = a beta-D-xylosyl-(1&lt;-&gt;1')-N-acylsphing-4-enine + UDP + H(+). The enzyme catalyses N-(9Z-octadecenoyl)-sphing-4-enine + UDP-alpha-D-xylose = beta-D-xylosyl-(1&lt;-&gt;1')-N-(9Z-octadecenoyl)-sphing-4-enine + UDP + H(+). The protein operates within lipid metabolism; sphingolipid metabolism. Functionally, participates in the initial step of the glucosylceramide-based glycosphingolipid/GSL synthetic pathway at the cytosolic surface of the Golgi. Catalyzes the transfer of glucose from UDP-glucose to ceramide to produce glucosylceramide/GlcCer (such as beta-D-glucosyl-(1&lt;-&gt;1')-N-acylsphing-4-enine). Glucosylceramide is the core component of glycosphingolipids/GSLs, amphipathic molecules consisting of a ceramide lipid moiety embedded in the outer leaflet of the membrane, linked to one of hundreds of different externally oriented oligosaccharide structures. Glycosphingolipids are essential components of membrane microdomains that mediate membrane trafficking and signal transduction. They are implicated in many fundamental cellular processes, including growth, differentiation, migration, morphogenesis, cell-to-cell and cell-to-matrix interactions. Catalyzes the synthesis of xylosylceramide/XylCer (such as beta-D-xylosyl-(1&lt;-&gt;1')-N-acylsphing-4-enine) using UDP-Xyl as xylose donor. The sequence is that of Ceramide glucosyltransferase-B (ugcg-b) from Xenopus laevis (African clawed frog).